Here is a 33-residue protein sequence, read N- to C-terminus: ANKRPVWIMAHMVNAVAQIDEFVNLGANSIETD.

The active site involves His-11. 2 residues coordinate Mg(2+): Glu-31 and Asp-33.

The protein belongs to the arthropod phospholipase D family. Class II subfamily. Requires Mg(2+) as cofactor. In terms of processing, contains 2 disulfide bonds. In terms of tissue distribution, expressed by the venom gland.

The protein localises to the secreted. The enzyme catalyses an N-(acyl)-sphingosylphosphocholine = an N-(acyl)-sphingosyl-1,3-cyclic phosphate + choline. It carries out the reaction an N-(acyl)-sphingosylphosphoethanolamine = an N-(acyl)-sphingosyl-1,3-cyclic phosphate + ethanolamine. The catalysed reaction is a 1-acyl-sn-glycero-3-phosphocholine = a 1-acyl-sn-glycero-2,3-cyclic phosphate + choline. It catalyses the reaction a 1-acyl-sn-glycero-3-phosphoethanolamine = a 1-acyl-sn-glycero-2,3-cyclic phosphate + ethanolamine. Its function is as follows. Dermonecrotic toxins cleave the phosphodiester linkage between the phosphate and headgroup of certain phospholipids (sphingolipid and lysolipid substrates), forming an alcohol (often choline) and a cyclic phosphate. This toxin acts on sphingomyelin (SM) with high activity (9.5 U/mg). It may also act on ceramide phosphoethanolamine (CPE), lysophosphatidylcholine (LPC) and lysophosphatidylethanolamine (LPE), but not on lysophosphatidylserine (LPS), and lysophosphatidylglycerol (LPG). It acts by transphosphatidylation, releasing exclusively cyclic phosphate products as second products. Induces dermonecrosis, hemolysis, increased vascular permeability, edema, inflammatory response, and platelet aggregation. The polypeptide is Dermonecrotic toxin LbSicTox-alphaIB1b (Loxosceles boneti (North American fiddleback spider)).